The chain runs to 111 residues: Large ribosomal subunit protein uL24 (111 aa).

Residues 85 to 111 form a disordered region; sequence NTNDPRRKDIINRKASRQKEEQGGKAQ. Positions 88–111 are enriched in basic and acidic residues; sequence DPRRKDIINRKASRQKEEQGGKAQ.

This sequence belongs to the universal ribosomal protein uL24 family. As to quaternary structure, part of the 50S ribosomal subunit.

Its function is as follows. One of two assembly initiator proteins, it binds directly to the 5'-end of the 23S rRNA, where it nucleates assembly of the 50S subunit. In terms of biological role, located at the polypeptide exit tunnel on the outside of the subunit. This is Large ribosomal subunit protein uL24 from Metallosphaera sedula (strain ATCC 51363 / DSM 5348 / JCM 9185 / NBRC 15509 / TH2).